The following is a 418-amino-acid chain: MFRRLLIATIVGILAAFAVAGFRHAMLLLEWLFLNNDSGSLVNAATNLSPWRRLLTPALGGLAAGLLLMGWQKFTQQRPHAPTDYMEALQTDGQFDYAASLVKSLASLLVVTSGSAIGREGAMILLAALAASCFAQRFTPRQEWKLWIACGAAAGMAAAYRAPLAGSLFIAEVLFGTMMLASLGPVIISAVVALLISNLINHSDALLYSVQLSVTVQARDYALIISTGVLAGLCGPLLLTLMNACHRGFVSLKLAPPWQLALGGLIVGLLSLFTPAVWGNGYSTVQSFLTAPPLLMIIAGIFLCKLCAVLASSGSGAPGGVFTPTLFIGLAIGMLYGRSLGLWLPDGEEITLLLGLTGMATLLAATTHAPIMSTLMICEMTGEYQLLPGLLIACVIASVISRTLHRDSIYRQHTAKHS.

Topologically, residues 1–4 (MFRR) are cytoplasmic. A helical transmembrane segment spans residues 5 to 25 (LLIATIVGILAAFAVAGFRHA). Topologically, residues 26–53 (MLLLEWLFLNNDSGSLVNAATNLSPWRR) are periplasmic. Residues 54 to 74 (LLTPALGGLAAGLLLMGWQKF) form a helical membrane-spanning segment. At 75–145 (TQQRPHAPTD…QRFTPRQEWK (71 aa)) the chain is on the cytoplasmic side. A helical membrane pass occupies residues 146 to 166 (LWIACGAAAGMAAAYRAPLAG). Topologically, residues 167-177 (SLFIAEVLFGT) are periplasmic. A helical membrane pass occupies residues 178–200 (MMLASLGPVIISAVVALLISNLI). The Cytoplasmic segment spans residues 201–221 (NHSDALLYSVQLSVTVQARDY). A helical transmembrane segment spans residues 222 to 242 (ALIISTGVLAGLCGPLLLTLM). Over 243–257 (NACHRGFVSLKLAPP) the chain is Periplasmic. A helical membrane pass occupies residues 258–278 (WQLALGGLIVGLLSLFTPAVW). Over 279–290 (GNGYSTVQSFLT) the chain is Cytoplasmic. A helical transmembrane segment spans residues 291-311 (APPLLMIIAGIFLCKLCAVLA). At 312-315 (SSGS) the chain is on the periplasmic side. Residues 316–336 (GAPGGVFTPTLFIGLAIGMLY) form a helical membrane-spanning segment. Residues 337-351 (GRSLGLWLPDGEEIT) are Cytoplasmic-facing. Residues 352-372 (LLLGLTGMATLLAATTHAPIM) traverse the membrane as a helical segment. Over 373-379 (STLMICE) the chain is Periplasmic. Residues 380 to 400 (MTGEYQLLPGLLIACVIASVI) form a helical membrane-spanning segment. Residues 401 to 418 (SRTLHRDSIYRQHTAKHS) lie on the Cytoplasmic side of the membrane.

The protein belongs to the chloride channel (TC 2.A.49) family. ClcB subfamily.

Its subcellular location is the cell inner membrane. Its function is as follows. Probably acts as an electrical shunt for an outwardly-directed proton pump that is linked to amino acid decarboxylation, as part of the extreme acid resistance (XAR) response. In Escherichia coli O6:H1 (strain CFT073 / ATCC 700928 / UPEC), this protein is Voltage-gated ClC-type chloride channel ClcB (clcB).